Reading from the N-terminus, the 520-residue chain is Target of rapamycin complex 2 subunit MAPKAP1 (520 aa).

Residues 139–267 (QSILSVRLEQ…GFSTLALVEK (129 aa)) form the CRIM domain. The SIN1-type RBD stretch occupies residues 279–353 (LFVRINAAHG…QNSLEFCLVR (75 aa)). The interval 310–333 (KRRKGSQRNSGPQYRLEKQSQPNV) is disordered. Residues 382–487 (QYKSFKVSMI…IVLKVNYILE (106 aa)) form the SIN1-type PH domain. The a 1,2-diacyl-sn-glycero-3-phospho-(1D-myo-inositol-3,4,5-trisphosphate) site is built by Arg393, Lys428, and Lys464.

Belongs to the SIN1 family. Component of the mechanistic target of rapamycin complex 2 (mTORC2), consisting in two heterotretramers composed of MTOR, MLST8, RICTOR and MAPKAP1/SIN1. Contrary to mTORC1, mTORC2 does not bind to and is not sensitive to FKBP12-rapamycin.

It is found in the cell membrane. The protein resides in the endoplasmic reticulum membrane. The protein localises to the early endosome membrane. It localises to the late endosome membrane. Its subcellular location is the lysosome membrane. It is found in the golgi apparatus membrane. The protein resides in the mitochondrion outer membrane. The protein localises to the cytoplasm. It localises to the perinuclear region. Its subcellular location is the nucleus. Phosphatidylinositol 3,4,5-trisphosphate (PI(3,4,5)P3) promotes MTOR activation by relieving MAPKAP1/SIN1-mediated inhibition of MTOR that takes place in absence of PI(3,4,5)P3. Functionally, component of the mechanistic target of rapamycin complex 2 (mTORC2), which transduces signals from growth factors to pathways involved in proliferation, cytoskeletal organization, lipogenesis and anabolic output. In response to growth factors, mTORC2 phosphorylates and activates AGC protein kinase family members, including AKT (AKT1, AKT2 and AKT3), PKC (PRKCA, PRKCB and PRKCE) and SGK1. In contrast to mTORC1, mTORC2 is nutrient-insensitive. Within the mTORC2 complex, MAPKAP1/SIN1 acts as a substrate adapter which recognizes and binds AGC protein kinase family members for phosphorylation by MTOR. This chain is Target of rapamycin complex 2 subunit MAPKAP1 (mapkap1), found in Xenopus tropicalis (Western clawed frog).